We begin with the raw amino-acid sequence, 83 residues long: U-actitoxin-Aeq6a (83 aa).

A signal peptide spans 1–20 (MIYKAVFVCLVLVLLGDVFC). Positions 21–36 (SPRNSGGGTLNDNPFE) are excised as a propeptide. A Proline amide modification is found at Pro-82.

Contains 3 disulfide bonds. In terms of tissue distribution, expressed by acrorhagi.

It localises to the secreted. The protein resides in the nematocyst. Functionally, toxin. The chain is U-actitoxin-Aeq6a from Actinia equina (Beadlet anemone).